The following is a 181-amino-acid chain: uncharacterized protein (181 aa).

Positions 126–148 (SYKDKEEEEDEDPEEDDDDPRVQ) are disordered. The span at 131–144 (EEEEDEDPEEDDDD) shows a compositional bias: acidic residues.

The protein belongs to the chlamydial CPn_0422/CT_273/TC_0545 family.

This is an uncharacterized protein from Chlamydia pneumoniae (Chlamydophila pneumoniae).